The primary structure comprises 320 residues: NAC domain-containing protein 20 (320 aa).

One can recognise an NAC domain in the interval 14 to 170 (LPPGFRFHPT…DWAVCRIFHK (157 aa)). A DNA-binding region spans residues 114 to 176 (IGMKKTLVFY…IFHKSSGIKK (63 aa)).

Forms homodimers. Forms heterodimers with NAC26. In terms of tissue distribution, expressed in developing seeds.

The protein localises to the nucleus. It localises to the endoplasmic reticulum. Functionally, transcription factor that acts redundantly with NAC26 to regulate the expression of genes involved in the biosynthesis of starch and storage proteins in grain. Directly binds to the promoters of starch synthase 1 (SS1), pullulanase (PUL), glutelin A1 (GLUA1), glutelins B4 and B5 (GLUB4 and GLUB5), alpha-globulin and 16 kDa prolamin, and activates their expression. Possesses transactivation activity in yeast. The chain is NAC domain-containing protein 20 from Oryza sativa subsp. indica (Rice).